Reading from the N-terminus, the 93-residue chain is Aspartyl/glutamyl-tRNA(Asn/Gln) amidotransferase subunit C (93 aa).

The protein belongs to the GatC family. As to quaternary structure, heterotrimer of A, B and C subunits.

The catalysed reaction is L-glutamyl-tRNA(Gln) + L-glutamine + ATP + H2O = L-glutaminyl-tRNA(Gln) + L-glutamate + ADP + phosphate + H(+). The enzyme catalyses L-aspartyl-tRNA(Asn) + L-glutamine + ATP + H2O = L-asparaginyl-tRNA(Asn) + L-glutamate + ADP + phosphate + 2 H(+). In terms of biological role, allows the formation of correctly charged Asn-tRNA(Asn) or Gln-tRNA(Gln) through the transamidation of misacylated Asp-tRNA(Asn) or Glu-tRNA(Gln) in organisms which lack either or both of asparaginyl-tRNA or glutaminyl-tRNA synthetases. The reaction takes place in the presence of glutamine and ATP through an activated phospho-Asp-tRNA(Asn) or phospho-Glu-tRNA(Gln). This is Aspartyl/glutamyl-tRNA(Asn/Gln) amidotransferase subunit C from Rubrobacter xylanophilus (strain DSM 9941 / JCM 11954 / NBRC 16129 / PRD-1).